The following is a 440-amino-acid chain: 23S rRNA (uracil(1939)-C(5))-methyltransferase RlmD (440 aa).

The TRAM domain occupies 6-64; the sequence is PIHNAQPEQVFIESLDTEGRGIARVEGKVLFVDGALPGERVWARRTQNHKSFDRAELLQ. [4Fe-4S] cluster contacts are provided by cysteine 77, cysteine 83, cysteine 86, and cysteine 164. S-adenosyl-L-methionine contacts are provided by glutamine 273, phenylalanine 302, asparagine 307, glutamate 323, aspartate 351, and aspartate 372. The Nucleophile role is filled by cysteine 397.

The protein belongs to the class I-like SAM-binding methyltransferase superfamily. RNA M5U methyltransferase family. RlmD subfamily.

The catalysed reaction is uridine(1939) in 23S rRNA + S-adenosyl-L-methionine = 5-methyluridine(1939) in 23S rRNA + S-adenosyl-L-homocysteine + H(+). In terms of biological role, catalyzes the formation of 5-methyl-uridine at position 1939 (m5U1939) in 23S rRNA. This chain is 23S rRNA (uracil(1939)-C(5))-methyltransferase RlmD, found in Acidithiobacillus ferrooxidans (strain ATCC 23270 / DSM 14882 / CIP 104768 / NCIMB 8455) (Ferrobacillus ferrooxidans (strain ATCC 23270)).